The following is a 697-amino-acid chain: Elongation factor G 2 (697 aa).

A tr-type G domain is found at 6 to 281 (TNYRNFGIFA…AVVDFLPNPT (276 aa)). GTP contacts are provided by residues 15–22 (AHVDAGKT), 79–83 (DTPGH), and 133–136 (NKLD).

Belongs to the TRAFAC class translation factor GTPase superfamily. Classic translation factor GTPase family. EF-G/EF-2 subfamily.

It is found in the cytoplasm. In terms of biological role, catalyzes the GTP-dependent ribosomal translocation step during translation elongation. During this step, the ribosome changes from the pre-translocational (PRE) to the post-translocational (POST) state as the newly formed A-site-bound peptidyl-tRNA and P-site-bound deacylated tRNA move to the P and E sites, respectively. Catalyzes the coordinated movement of the two tRNA molecules, the mRNA and conformational changes in the ribosome. The chain is Elongation factor G 2 from Trichodesmium erythraeum (strain IMS101).